A 206-amino-acid polypeptide reads, in one-letter code: Outer-membrane lipoprotein carrier protein (206 aa).

The signal sequence occupies residues 1–21 (MTRLLFVLVLSVCLLPVPVKA).

It belongs to the LolA family. Monomer.

The protein resides in the periplasm. Functionally, participates in the translocation of lipoproteins from the inner membrane to the outer membrane. Only forms a complex with a lipoprotein if the residue after the N-terminal Cys is not an aspartate (The Asp acts as a targeting signal to indicate that the lipoprotein should stay in the inner membrane). The polypeptide is Outer-membrane lipoprotein carrier protein (Nitrosomonas europaea (strain ATCC 19718 / CIP 103999 / KCTC 2705 / NBRC 14298)).